We begin with the raw amino-acid sequence, 144 residues long: MDALDAISKWLAKQHVVTYCVGNGEALWCANAFYLYDRERVAFYLLSDTESRHGKMAGKLAPVAGTVNGQTKTVALIRGVQFSGELRLVEEPESEALRERYNRRFPVARVMSSPLWEIRLDEIKFTDNTLGFGKKLVWLRAEQA.

Belongs to the UPF0306 family.

This chain is UPF0306 protein ESA_03544, found in Cronobacter sakazakii (strain ATCC BAA-894) (Enterobacter sakazakii).